The chain runs to 157 residues: SsrA-binding protein (157 aa).

The disordered stretch occupies residues 133–157; that stretch reads LHDKRETAKERDWQRDKARLMRDKG. Basic and acidic residues predominate over residues 135 to 157; it reads DKRETAKERDWQRDKARLMRDKG.

It belongs to the SmpB family.

The protein resides in the cytoplasm. Functionally, required for rescue of stalled ribosomes mediated by trans-translation. Binds to transfer-messenger RNA (tmRNA), required for stable association of tmRNA with ribosomes. tmRNA and SmpB together mimic tRNA shape, replacing the anticodon stem-loop with SmpB. tmRNA is encoded by the ssrA gene; the 2 termini fold to resemble tRNA(Ala) and it encodes a 'tag peptide', a short internal open reading frame. During trans-translation Ala-aminoacylated tmRNA acts like a tRNA, entering the A-site of stalled ribosomes, displacing the stalled mRNA. The ribosome then switches to translate the ORF on the tmRNA; the nascent peptide is terminated with the 'tag peptide' encoded by the tmRNA and targeted for degradation. The ribosome is freed to recommence translation, which seems to be the essential function of trans-translation. This Methylobacterium sp. (strain 4-46) protein is SsrA-binding protein.